The primary structure comprises 105 residues: Large ribosomal subunit protein uL23 (105 aa).

Belongs to the universal ribosomal protein uL23 family. In terms of assembly, part of the 50S ribosomal subunit. Contacts protein L29, and trigger factor when it is bound to the ribosome.

In terms of biological role, one of the early assembly proteins it binds 23S rRNA. One of the proteins that surrounds the polypeptide exit tunnel on the outside of the ribosome. Forms the main docking site for trigger factor binding to the ribosome. This chain is Large ribosomal subunit protein uL23, found in Herminiimonas arsenicoxydans.